The primary structure comprises 231 residues: Albumin-2 (231 aa).

Hemopexin repeat units follow at residues Thr4–Leu55, Ser62–Phe112, Glu118–Phe166, and Glu172–Leu223. Positions 8, 66, 122, and 176 each coordinate Ca(2+).

Monomer and homodimer.

Its subcellular location is the cytoplasm. The protein localises to the cytosol. Its function is as follows. May play a role in response to oxidative stress and polyamine biosynthesis. The sequence is that of Albumin-2 from Pisum sativum (Garden pea).